The sequence spans 511 residues: Phospho-2-dehydro-3-deoxyheptonate aldolase 2, chloroplastic (511 aa).

The protein belongs to the class-II DAHP synthase family. Leaves, stems, tuber and roots.

The protein localises to the plastid. The protein resides in the chloroplast. The enzyme catalyses D-erythrose 4-phosphate + phosphoenolpyruvate + H2O = 7-phospho-2-dehydro-3-deoxy-D-arabino-heptonate + phosphate. It participates in metabolic intermediate biosynthesis; chorismate biosynthesis; chorismate from D-erythrose 4-phosphate and phosphoenolpyruvate: step 1/7. The protein is Phospho-2-dehydro-3-deoxyheptonate aldolase 2, chloroplastic (SHKB) of Solanum tuberosum (Potato).